Here is a 273-residue protein sequence, read N- to C-terminus: WIMGHMVNAIYQIDEFVNLGANSIETDVSFDDNANPEYTYHGIPCDCGRSCLKWENYNDFLKGLRSATTPGSSKYQSKLILVVFDLKTGSLYDNQASEAGKKLAKNLLKHYWNNGNNGGRAYIVLSIPDLNHYPLIKGFTDTLKQEGHPELLEKVGYDFSGNDAVGDVAKAYKKAGVSGHVWQSDGITNCLLRGLTRVKEAVANRDSGNGYINKVYYWTVDKRATTRDALDAGVDGVMTNYPDVIADVMNEAAYKNKVRLATYEDSPWVTFKK.

Residue His5 is part of the active site. Mg(2+) is bound by residues Glu25 and Asp27. His41 serves as the catalytic Nucleophile. 2 disulfides stabilise this stretch: Cys45/Cys51 and Cys47/Cys190. Asp85 is a binding site for Mg(2+).

This sequence belongs to the arthropod phospholipase D family. Class II subfamily. Mg(2+) serves as cofactor. In terms of tissue distribution, expressed by the venom gland.

The protein localises to the secreted. It carries out the reaction an N-(acyl)-sphingosylphosphocholine = an N-(acyl)-sphingosyl-1,3-cyclic phosphate + choline. The enzyme catalyses an N-(acyl)-sphingosylphosphoethanolamine = an N-(acyl)-sphingosyl-1,3-cyclic phosphate + ethanolamine. The catalysed reaction is a 1-acyl-sn-glycero-3-phosphocholine = a 1-acyl-sn-glycero-2,3-cyclic phosphate + choline. It catalyses the reaction a 1-acyl-sn-glycero-3-phosphoethanolamine = a 1-acyl-sn-glycero-2,3-cyclic phosphate + ethanolamine. Functionally, dermonecrotic toxins cleave the phosphodiester linkage between the phosphate and headgroup of certain phospholipids (sphingolipid and lysolipid substrates), forming an alcohol (often choline) and a cyclic phosphate. This toxin acts on sphingomyelin (SM). It may also act on ceramide phosphoethanolamine (CPE), lysophosphatidylcholine (LPC) and lysophosphatidylethanolamine (LPE), but not on lysophosphatidylserine (LPS), and lysophosphatidylglycerol (LPG). It acts by transphosphatidylation, releasing exclusively cyclic phosphate products as second products. Induces dermonecrosis, hemolysis, increased vascular permeability, edema, inflammatory response, and platelet aggregation. The polypeptide is Dermonecrotic toxin LhSicTox-alphaIA2av (Loxosceles hirsuta (Recluse spider)).